An 826-amino-acid chain; its full sequence is Ribosome-releasing factor 2, mitochondrial (826 aa).

The transit peptide at 1-44 (MIVRNLLGKNRLCCLQPKLLLSTLSQRPQLQLSLQLLCRATRLY) directs the protein to the mitochondrion. Positions 53-340 (PKTRNIGIIA…GITNYLPSPL (288 aa)) constitute a tr-type G domain. Residues 62–69 (AHIDAGKT), 126–130 (DTPGH), and 180–183 (NKMD) each bind GTP.

Belongs to the TRAFAC class translation factor GTPase superfamily. Classic translation factor GTPase family. EF-G/EF-2 subfamily.

The protein resides in the mitochondrion. Mitochondrial GTPase that mediates the disassembly of ribosomes from messenger RNA at the termination of mitochondrial protein biosynthesis. Not involved in the GTP-dependent ribosomal translocation step during translation elongation. The sequence is that of Ribosome-releasing factor 2, mitochondrial from Lodderomyces elongisporus (strain ATCC 11503 / CBS 2605 / JCM 1781 / NBRC 1676 / NRRL YB-4239) (Yeast).